We begin with the raw amino-acid sequence, 347 residues long: Putative phosphoesterase 078R (347 aa).

A divalent metal cation is bound by residues D52, N87, and H211.

This sequence belongs to the metallophosphoesterase superfamily. IIV-6 244L family.

This Invertebrate iridescent virus 3 (IIV-3) protein is Putative phosphoesterase 078R.